Reading from the N-terminus, the 190-residue chain is Holliday junction branch migration complex subunit RuvA (190 aa).

The domain I stretch occupies residues 1–64 (MIGRITGTLI…EDAHILYGFA (64 aa)). The interval 65-137 (TAAERGAFRE…MRGKLGADIG (73 aa)) is domain II. The tract at residues 137–141 (GATAH) is flexible linker. The interval 142–190 (AVPDSQTDILNALLALGYSDKESQAALKKLPEGTGVSEGIRLALKALVR) is domain III.

This sequence belongs to the RuvA family. As to quaternary structure, homotetramer. Forms an RuvA(8)-RuvB(12)-Holliday junction (HJ) complex. HJ DNA is sandwiched between 2 RuvA tetramers; dsDNA enters through RuvA and exits via RuvB. An RuvB hexamer assembles on each DNA strand where it exits the tetramer. Each RuvB hexamer is contacted by two RuvA subunits (via domain III) on 2 adjacent RuvB subunits; this complex drives branch migration. In the full resolvosome a probable DNA-RuvA(4)-RuvB(12)-RuvC(2) complex forms which resolves the HJ.

It localises to the cytoplasm. Functionally, the RuvA-RuvB-RuvC complex processes Holliday junction (HJ) DNA during genetic recombination and DNA repair, while the RuvA-RuvB complex plays an important role in the rescue of blocked DNA replication forks via replication fork reversal (RFR). RuvA specifically binds to HJ cruciform DNA, conferring on it an open structure. The RuvB hexamer acts as an ATP-dependent pump, pulling dsDNA into and through the RuvAB complex. HJ branch migration allows RuvC to scan DNA until it finds its consensus sequence, where it cleaves and resolves the cruciform DNA. This is Holliday junction branch migration complex subunit RuvA from Bordetella petrii (strain ATCC BAA-461 / DSM 12804 / CCUG 43448).